The primary structure comprises 405 residues: Multidrug resistance protein MdtA (405 aa).

The signal sequence occupies residues 1 to 22; that stretch reads MKTPRRFPLIALTVAAVLTAAA. Positions 35-52 are enriched in polar residues; that stretch reads VQNRQGTEQQRASNSQGS. The segment at 35-62 is disordered; it reads VQNRQGTEQQRASNSQGSAKRAGNAPPV.

Belongs to the membrane fusion protein (MFP) (TC 8.A.1) family. In terms of assembly, part of a tripartite efflux system composed of MdtA, MdtB and MdtC.

Its subcellular location is the cell inner membrane. This Erwinia amylovora (strain ATCC 49946 / CCPPB 0273 / Ea273 / 27-3) protein is Multidrug resistance protein MdtA.